A 33-amino-acid chain; its full sequence is Mu-theraphotoxin-Tp1a (33 aa).

3 cysteine pairs are disulfide-bonded: C2/C17, C9/C22, and C16/C29. Position 33 is an isoleucine amide (I33).

Belongs to the neurotoxin 10 (Hwtx-1) family. 55 (ProTx-III) subfamily. In terms of tissue distribution, expressed by the venom gland.

Its subcellular location is the secreted. Functionally, inhibits voltage-gated sodium channels without significantly altering the voltage dependence of activation or inactivation. Preferentially inhibits human Nav1.7/SCN9A (IC(50)=2.1 nM) &gt; human Nav1.6/SCN8A &gt; human Nav1.2/SCN2A &gt; human Nav1.1/SCN1A &gt; human Nav1.3/SCN3A channels. Exhibits analgesic properties by reversing spontaneous pain induced in mice by intraplantar injection with OD1 (AC P84646), a scorpion toxin that potentiates human Nav1.7/SCN9A. In Thrixopelma pruriens (Peruvian green velvet tarantula), this protein is Mu-theraphotoxin-Tp1a.